Here is a 167-residue protein sequence, read N- to C-terminus: Putative ripening-related protein 6 (167 aa).

A signal peptide spans 1 to 23; that stretch reads MANAKQLALFAMLVLLLASCAAA. The disordered stretch occupies residues 28–57; it reads KPDPCDGGGGGVDSHLPPGMRRCSSPAVSE.

This sequence belongs to the kiwellin family.

It is found in the secreted. The sequence is that of Putative ripening-related protein 6 from Oryza sativa subsp. japonica (Rice).